Here is a 553-residue protein sequence, read N- to C-terminus: HTH-type transcriptional regulator SgrR (553 aa).

The region spanning 1-113 (MSTSRLQQQF…RQMLLSQLGR (113 aa)) is the HTH marR-type domain. Residues 26 to 49 (LQALAEVLNCSRRHVRSLLGKMQH) constitute a DNA-binding region (H-T-H motif). Residues 163 to 494 (ELEPDLSHHW…EELHQDIESW (332 aa)) form a solute-binding region.

Functionally, activates the small RNA gene sgrS under glucose-phosphate stress conditions as well as yfdZ. Represses its own transcription under both stress and non-stress conditions. Might act as a sensor of the intracellular accumulation of phosphoglucose by binding these molecules in its C-terminal solute-binding domain. The chain is HTH-type transcriptional regulator SgrR from Yersinia pestis bv. Antiqua (strain Antiqua).